Here is a 169-residue protein sequence, read N- to C-terminus: Ribosome maturation factor RimM (169 aa).

The region spanning 92 to 166 (NKEYYWNDIF…IVIDLTNLNN (75 aa)) is the PRC barrel domain.

This sequence belongs to the RimM family. In terms of assembly, binds ribosomal protein uS19.

The protein localises to the cytoplasm. In terms of biological role, an accessory protein needed during the final step in the assembly of 30S ribosomal subunit, possibly for assembly of the head region. Essential for efficient processing of 16S rRNA. May be needed both before and after RbfA during the maturation of 16S rRNA. It has affinity for free ribosomal 30S subunits but not for 70S ribosomes. The protein is Ribosome maturation factor RimM of Buchnera aphidicola subsp. Cinara cedri (strain Cc).